The sequence spans 574 residues: NEDD4-binding protein 2-like 2 (574 aa).

Disordered regions lie at residues 82–110, 127–161, 182–204, and 542–574; these read HKEM…LAPA, YKPP…QKFN, ENEN…QTLS, and TQKS…TDDY. 2 stretches are compositionally biased toward basic and acidic residues: residues 129-141 and 149-161; these read PPEK…RKNE and DSKR…QKFN. Residues 162–196 adopt a coiled-coil conformation; the sequence is SKKLEIDTELSQFYKEIEELENENEASQGSCKEPE. The span at 563 to 574 shows a compositional bias: polar residues; that stretch reads GSHSQVSITDDY.

The polypeptide is NEDD4-binding protein 2-like 2 (N4bp2l2) (Rattus norvegicus (Rat)).